Reading from the N-terminus, the 239-residue chain is Peroxygenase (239 aa).

At glycine 2 the chain carries N-acetylglycine. Positions 60-95 constitute an EF-hand domain; sequence HNMSVLQQRAAFFDRNNDGIVYPWETYQGFRAVGFG. 4 residues coordinate Ca(2+): aspartate 73, asparagine 75, aspartate 77, and glutamate 84. The Proline-knot signature appears at 116 to 125; it reads PSWIPSPVLS.

The protein belongs to the caleosin family. In terms of assembly, homodimer. It depends on heme b as a cofactor. Ca(2+) is required as a cofactor. As to expression, expressed in pollen (at protein level). Not expressed in leaf, root, stem, tepal, ovary, style, filament or stigma (at protein level).

The protein resides in the lipid droplet. Its subcellular location is the microsome membrane. The enzyme catalyses RH + ROOH = ROH + ROH.. Calcium-binding peroxygenase involved in the degradation of storage lipid in oil bodies. In Lilium longiflorum (Trumpet lily), this protein is Peroxygenase.